A 429-amino-acid chain; its full sequence is Glutamate-1-semialdehyde 2,1-aminomutase 2 (429 aa).

K268 carries the post-translational modification N6-(pyridoxal phosphate)lysine.

The protein belongs to the class-III pyridoxal-phosphate-dependent aminotransferase family. HemL subfamily. In terms of assembly, homodimer. It depends on pyridoxal 5'-phosphate as a cofactor.

Its subcellular location is the cytoplasm. It catalyses the reaction (S)-4-amino-5-oxopentanoate = 5-aminolevulinate. The protein operates within porphyrin-containing compound metabolism; protoporphyrin-IX biosynthesis; 5-aminolevulinate from L-glutamyl-tRNA(Glu): step 2/2. This is Glutamate-1-semialdehyde 2,1-aminomutase 2 from Halalkalibacterium halodurans (strain ATCC BAA-125 / DSM 18197 / FERM 7344 / JCM 9153 / C-125) (Bacillus halodurans).